Reading from the N-terminus, the 79-residue chain is MGGFTSIWHWVIVLLVIVLLFGAKKIPELAKGLGSGIKNFKKAVKDDEEEAKNEPKTLDAQVTQAKVHESSEIKNKQEG.

The chain crosses the membrane as a helical span at residues 1–21 (MGGFTSIWHWVIVLLVIVLLF). Residues 48–79 (EEEAKNEPKTLDAQVTQAKVHESSEIKNKQEG) are disordered. Residues 66 to 79 (KVHESSEIKNKQEG) show a composition bias toward basic and acidic residues.

The protein belongs to the TatA/E family. As to quaternary structure, the Tat system comprises two distinct complexes: a TatABC complex, containing multiple copies of TatA, TatB and TatC subunits, and a separate TatA complex, containing only TatA subunits. Substrates initially bind to the TatABC complex, which probably triggers association of the separate TatA complex to form the active translocon.

The protein resides in the cell inner membrane. In terms of biological role, part of the twin-arginine translocation (Tat) system that transports large folded proteins containing a characteristic twin-arginine motif in their signal peptide across membranes. TatA could form the protein-conducting channel of the Tat system. This Helicobacter acinonychis (strain Sheeba) protein is Sec-independent protein translocase protein TatA.